Consider the following 336-residue polypeptide: Ketol-acid reductoisomerase (NADP(+)) (336 aa).

The KARI N-terminal Rossmann domain maps to alanine 2 to threonine 182. NADP(+)-binding positions include tyrosine 25–glutamine 28, serine 51, serine 53, and aspartate 83–glutamine 86. Residue histidine 108 is part of the active site. NADP(+) is bound at residue glycine 134. In terms of domain architecture, KARI C-terminal knotted spans threonine 183–threonine 328. Residues aspartate 191, glutamate 195, glutamate 227, and glutamate 231 each coordinate Mg(2+). Serine 252 is a binding site for substrate.

This sequence belongs to the ketol-acid reductoisomerase family. It depends on Mg(2+) as a cofactor.

The enzyme catalyses (2R)-2,3-dihydroxy-3-methylbutanoate + NADP(+) = (2S)-2-acetolactate + NADPH + H(+). It catalyses the reaction (2R,3R)-2,3-dihydroxy-3-methylpentanoate + NADP(+) = (S)-2-ethyl-2-hydroxy-3-oxobutanoate + NADPH + H(+). It participates in amino-acid biosynthesis; L-isoleucine biosynthesis; L-isoleucine from 2-oxobutanoate: step 2/4. Its pathway is amino-acid biosynthesis; L-valine biosynthesis; L-valine from pyruvate: step 2/4. Its function is as follows. Involved in the biosynthesis of branched-chain amino acids (BCAA). Catalyzes an alkyl-migration followed by a ketol-acid reduction of (S)-2-acetolactate (S2AL) to yield (R)-2,3-dihydroxy-isovalerate. In the isomerase reaction, S2AL is rearranged via a Mg-dependent methyl migration to produce 3-hydroxy-3-methyl-2-ketobutyrate (HMKB). In the reductase reaction, this 2-ketoacid undergoes a metal-dependent reduction by NADPH to yield (R)-2,3-dihydroxy-isovalerate. The sequence is that of Ketol-acid reductoisomerase (NADP(+)) from Lachnoclostridium phytofermentans (strain ATCC 700394 / DSM 18823 / ISDg) (Clostridium phytofermentans).